The sequence spans 254 residues: Type III pantothenate kinase (254 aa).

6-13 (DVGNSNIV) contacts ATP. Residues Y100 and 107-110 (GADR) each bind substrate. The Proton acceptor role is filled by D109. D129 lines the K(+) pocket. An ATP-binding site is contributed by T132. T184 provides a ligand contact to substrate.

This sequence belongs to the type III pantothenate kinase family. As to quaternary structure, homodimer. NH4(+) serves as cofactor. Requires K(+) as cofactor.

Its subcellular location is the cytoplasm. The enzyme catalyses (R)-pantothenate + ATP = (R)-4'-phosphopantothenate + ADP + H(+). Its pathway is cofactor biosynthesis; coenzyme A biosynthesis; CoA from (R)-pantothenate: step 1/5. Functionally, catalyzes the phosphorylation of pantothenate (Pan), the first step in CoA biosynthesis. In Citrifermentans bemidjiense (strain ATCC BAA-1014 / DSM 16622 / JCM 12645 / Bem) (Geobacter bemidjiensis), this protein is Type III pantothenate kinase.